We begin with the raw amino-acid sequence, 203 residues long: Urease accessory protein UreG (203 aa).

Residue 11–18 (GPVGSGKT) participates in GTP binding.

Belongs to the SIMIBI class G3E GTPase family. UreG subfamily. In terms of assembly, homodimer. UreD, UreF and UreG form a complex that acts as a GTP-hydrolysis-dependent molecular chaperone, activating the urease apoprotein by helping to assemble the nickel containing metallocenter of UreC. The UreE protein probably delivers the nickel.

Its subcellular location is the cytoplasm. Functionally, facilitates the functional incorporation of the urease nickel metallocenter. This process requires GTP hydrolysis, probably effectuated by UreG. The protein is Urease accessory protein UreG of Prochlorococcus marinus (strain AS9601).